Here is a 164-residue protein sequence, read N- to C-terminus: MKSVITTTISAADAAGRYPSTSDLQSVQGNIQRAAARLEAAEKLGSNHEAVVKEAGDACFSKYGYNKNPGEAGENQEKINKCYRDIDHYMRLINYTLVVGGTGPLDEWGIAGAREVYRTLNLPSAAYIAAFVFTRDRLCIPRDMSAQAGVEFCTALDYLINSLS.

The (2R,3E)-phycoerythrobilin site is built by N47, K81, C82, R84, H88, R137, C139, and R142.

Belongs to the phycobiliprotein family. In terms of assembly, heterododecamer of 6 alpha and 6 beta chains. The basic functional unit of phycobiliproteins is a ring-shaped hexamer formed from two back-to-back trimers contacting via the alpha chain subunits. The trimers are composed of alpha/beta subunit heterodimers arranged around a three-fold axis of symmetry. The phycoerythrins also contain a gamma subunit which is located in the center of the hexamer. Post-translationally, contains two covalently linked phycoerythrobilin chromophores. In PubMed:8876649 the authors refer to the bilins as phycoerythrobilins. In the PDB entries, the bilins are named as phycocyanobilins although the modeled compounds correspond to phycoerythrobilins.

It localises to the plastid. The protein resides in the chloroplast thylakoid membrane. In terms of biological role, light-harvesting photosynthetic tetrapyrrole chromophore-protein from the phycobiliprotein complex. This chain is R-phycoerythrin alpha chain (cpeA), found in Polysiphonia urceolata (Red alga).